We begin with the raw amino-acid sequence, 259 residues long: Small ribosomal subunit protein uS2 (259 aa).

This sequence belongs to the universal ribosomal protein uS2 family.

The sequence is that of Small ribosomal subunit protein uS2 from Streptococcus pneumoniae serotype 4 (strain ATCC BAA-334 / TIGR4).